The primary structure comprises 287 residues: MTLPASPPRYAVIGNPIAHSRSPQIHAMFSAQTGRPLRYERLLAPVDGFLPTVQAFRESGGLGLNVTVPFKLEAYALAEARLSERARLAGAVNTLSWRDGAWHGCNTDGVGLVNDLLRLGVALAGARVLLVGAGGAARGVLQPLAAAGCARIHIVNRTAARAAELAAAWRAAAPRTGTQVSAGALAQAAEPGGWDVAINATASGLQGAAPDLPGGLYAPDALAYDMMYGARPTAFMRQAEADGAARCADGLGMLVGQAAESFHIWHGVRPDPGPVLLALRTELLAAG.

Residues 20-22 (SRS) and T67 contribute to the shikimate site. K71 (proton acceptor) is an active-site residue. E84 is a binding site for NADP(+). 2 residues coordinate shikimate: N93 and D108. Residues 132-136 (GAGGA), 156-161 (NRTAAR), and M226 each bind NADP(+). Y228 is a binding site for shikimate. G250 contacts NADP(+).

The protein belongs to the shikimate dehydrogenase family. Homodimer.

The catalysed reaction is shikimate + NADP(+) = 3-dehydroshikimate + NADPH + H(+). The protein operates within metabolic intermediate biosynthesis; chorismate biosynthesis; chorismate from D-erythrose 4-phosphate and phosphoenolpyruvate: step 4/7. In terms of biological role, involved in the biosynthesis of the chorismate, which leads to the biosynthesis of aromatic amino acids. Catalyzes the reversible NADPH linked reduction of 3-dehydroshikimate (DHSA) to yield shikimate (SA). The polypeptide is Shikimate dehydrogenase (NADP(+)) (Bordetella pertussis (strain Tohama I / ATCC BAA-589 / NCTC 13251)).